We begin with the raw amino-acid sequence, 385 residues long: Acetate kinase (385 aa).

N8 lines the Mg(2+) pocket. Residue K15 coordinates ATP. Residue R85 coordinates substrate. D142 (proton donor/acceptor) is an active-site residue. ATP is bound by residues 200–204 (HLGNG), 275–277 (DMR), and 323–327 (GIGEN). E373 is a Mg(2+) binding site.

The protein belongs to the acetokinase family. In terms of assembly, homodimer. Requires Mg(2+) as cofactor. Mn(2+) is required as a cofactor.

The protein resides in the cytoplasm. The catalysed reaction is acetate + ATP = acetyl phosphate + ADP. Its pathway is metabolic intermediate biosynthesis; acetyl-CoA biosynthesis; acetyl-CoA from acetate: step 1/2. Its function is as follows. Catalyzes the formation of acetyl phosphate from acetate and ATP. Can also catalyze the reverse reaction. This is Acetate kinase from Francisella tularensis subsp. holarctica (strain OSU18).